We begin with the raw amino-acid sequence, 444 residues long: Phosphoglucosamine mutase (444 aa).

Residue Ser102 is the Phosphoserine intermediate of the active site. Mg(2+)-binding residues include Ser102, Asp241, Asp243, and Asp245. Ser102 carries the post-translational modification Phosphoserine.

The protein belongs to the phosphohexose mutase family. Mg(2+) serves as cofactor. In terms of processing, activated by phosphorylation.

The enzyme catalyses alpha-D-glucosamine 1-phosphate = D-glucosamine 6-phosphate. In terms of biological role, catalyzes the conversion of glucosamine-6-phosphate to glucosamine-1-phosphate. The polypeptide is Phosphoglucosamine mutase (Pasteurella multocida (strain Pm70)).